A 482-amino-acid polypeptide reads, in one-letter code: Dual specificity protein phosphatase 10 (482 aa).

One can recognise a Rhodanese domain in the interval 168–285 (PSQGPVIIDC…FKQNHENLCD (118 aa)). The interaction with MAP kinases stretch occupies residues 199 to 215 (KISRRRLQQGKITVLDL). One can recognise a Tyrosine-protein phosphatase domain in the interval 321-464 (ELTPILPFLF…LLEFEEDLNN (144 aa)). Cysteine 408 acts as the Phosphocysteine intermediate in catalysis.

Belongs to the protein-tyrosine phosphatase family. Non-receptor class dual specificity subfamily. As to quaternary structure, monomer. Interacts with MAPK14. Expressed in keratinocytes (at protein level). Detected in brain.

Its subcellular location is the cytoplasm. The protein localises to the nucleus. It carries out the reaction O-phospho-L-tyrosyl-[protein] + H2O = L-tyrosyl-[protein] + phosphate. It catalyses the reaction O-phospho-L-seryl-[protein] + H2O = L-seryl-[protein] + phosphate. The catalysed reaction is O-phospho-L-threonyl-[protein] + H2O = L-threonyl-[protein] + phosphate. Its function is as follows. Protein phosphatase involved in the inactivation of MAP kinases. Has a specificity for the MAPK11/MAPK12/MAPK13/MAPK14 subfamily. It preferably dephosphorylates p38. The protein is Dual specificity protein phosphatase 10 (DUSP10) of Homo sapiens (Human).